We begin with the raw amino-acid sequence, 155 residues long: 6,7-dimethyl-8-ribityllumazine synthase (155 aa).

5-amino-6-(D-ribitylamino)uracil-binding positions include Phe-23, 57 to 59 (AFE), and 81 to 83 (AVI). Position 86–87 (86–87 (AT)) interacts with (2S)-2-hydroxy-3-oxobutyl phosphate. His-89 serves as the catalytic Proton donor. A 5-amino-6-(D-ribitylamino)uracil-binding site is contributed by Phe-114. Arg-128 contributes to the (2S)-2-hydroxy-3-oxobutyl phosphate binding site.

This sequence belongs to the DMRL synthase family.

It carries out the reaction (2S)-2-hydroxy-3-oxobutyl phosphate + 5-amino-6-(D-ribitylamino)uracil = 6,7-dimethyl-8-(1-D-ribityl)lumazine + phosphate + 2 H2O + H(+). The protein operates within cofactor biosynthesis; riboflavin biosynthesis; riboflavin from 2-hydroxy-3-oxobutyl phosphate and 5-amino-6-(D-ribitylamino)uracil: step 1/2. Functionally, catalyzes the formation of 6,7-dimethyl-8-ribityllumazine by condensation of 5-amino-6-(D-ribitylamino)uracil with 3,4-dihydroxy-2-butanone 4-phosphate. This is the penultimate step in the biosynthesis of riboflavin. The protein is 6,7-dimethyl-8-ribityllumazine synthase of Pelotomaculum thermopropionicum (strain DSM 13744 / JCM 10971 / SI).